Consider the following 462-residue polypeptide: Centrosomal protein of 55 kDa (462 aa).

Over residues 1-11 the composition is skewed to basic and acidic residues; sequence MSSRSPKDLIK. Residues 1-25 form a disordered region; it reads MSSRSPKDLIKSKWGSRPSSSKSDT. A compositionally biased stretch (low complexity) spans 12–23; that stretch reads SKWGSRPSSSKS. Coiled-coil stretches lie at residues 50–185 and 228–400; these read KVAN…QQWL and YLQE…KQLH. 2 positions are modified to phosphoserine: S96 and S99. The tract at residues 157-235 is interaction with TSG101; the sequence is ANCFNSSMNS…EGYLQEEKQK (79 aa). The interaction with PDCD6IP stretch occupies residues 160–214; the sequence is FNSSMNSIHEKEMQLKDALEKNQQWLVYDQQREAYVKGLLAKIFELEKRTETAAA. A required for localization to the interphase centrosome and to the midbody during cytokinesis region spans residues 354–462; sequence QMQACTLDFE…LLVHVEYCMK (109 aa). Phosphoserine is present on residues S423 and S426. T428 carries the post-translational modification Phosphothreonine. Phosphoserine; by PLK1 is present on S434.

As to quaternary structure, homodimer. Interacts (phosphorylated on Ser-423 and Ser-426) with PLK1; the interaction is indirect via the MTMR3:MTMR4 heterooligomer, occurs during early mitosis, regulates the phosphorylation of CEP55 by PLK1 and its recruitment to the midbody where it can mediate cell abscission. Interacts with AKAP9/CG-NAP; the interaction occurs in interphase and is lost upon mitotic entry. Interacts with PCNT/Kendrin; the interaction occurs in interphase and is lost upon mitotic entry. Directly interacts with PDCD6IP; this interaction is required for PDCD6IP targeting to the midbody; CEP55 binds PDCD6IP in a 2:1 stoichiometry; PDCD6IP competes with TSG101 for the same binding site. Interacts with TSG101; TSG101 competes with PDCD6IP for the same binding site; interaction is required for cytokinesis. Interacts with MVB12A, VPS37B, VPS37C and VPS28. There is a hierachy of phosphorylation, where both Ser-423 and Ser-426 are phosphorylated at the onset of mitosis, prior to Ser-434. Phosphorylation at Ser-423 and Ser-426 is required for dissociation from the centrosome at the G2/M boundary. Phosphorylation at the 3 sites, Ser-423, Ser-426 and Ser-434, is required for protein function at the final stages of cell division to complete cytokinesis successfully.

The protein localises to the cytoplasm. It is found in the cytoskeleton. Its subcellular location is the microtubule organizing center. It localises to the centrosome. The protein resides in the centriole. The protein localises to the cleavage furrow. It is found in the midbody. Its subcellular location is the midbody ring. Its function is as follows. Plays a role in mitotic exit and cytokinesis. Recruits PDCD6IP and TSG101 to midbody during cytokinesis. Required for successful completion of cytokinesis. Not required for microtubule nucleation. Plays a role in the development of the brain and kidney. The protein is Centrosomal protein of 55 kDa of Rattus norvegicus (Rat).